The chain runs to 91 residues: Small ribosomal subunit protein uS19 (91 aa).

It belongs to the universal ribosomal protein uS19 family.

Its function is as follows. Protein S19 forms a complex with S13 that binds strongly to the 16S ribosomal RNA. In Desulfotalea psychrophila (strain LSv54 / DSM 12343), this protein is Small ribosomal subunit protein uS19.